The sequence spans 186 residues: Nucleoside triphosphate pyrophosphatase (186 aa).

The active-site Proton acceptor is Asp68.

This sequence belongs to the Maf family. A divalent metal cation is required as a cofactor.

The protein localises to the cytoplasm. It carries out the reaction a ribonucleoside 5'-triphosphate + H2O = a ribonucleoside 5'-phosphate + diphosphate + H(+). The catalysed reaction is a 2'-deoxyribonucleoside 5'-triphosphate + H2O = a 2'-deoxyribonucleoside 5'-phosphate + diphosphate + H(+). Its function is as follows. Nucleoside triphosphate pyrophosphatase. May have a dual role in cell division arrest and in preventing the incorporation of modified nucleotides into cellular nucleic acids. The sequence is that of Nucleoside triphosphate pyrophosphatase from Prochlorococcus marinus (strain MIT 9303).